Here is a 347-residue protein sequence, read N- to C-terminus: NADH-ubiquinone oxidoreductase chain 2 (347 aa).

11 consecutive transmembrane segments (helical) span residues 3-23, 25-45, 59-79, 96-116, 122-142, 149-169, 178-198, 201-221, 239-259, 274-294, and 326-346; these read PMIL…VMMS, HWFL…PVLM, YFLT…INLI, TLLT…FWVP, VSLN…LSLL, VNTN…GWGG, IMAY…IYNP, SLLN…LLMF, IITT…PLSG, DSVI…FFYM, and MTSL…AMIL.

Belongs to the complex I subunit 2 family. Core subunit of respiratory chain NADH dehydrogenase (Complex I) which is composed of 45 different subunits. Interacts with TMEM242.

Its subcellular location is the mitochondrion inner membrane. The enzyme catalyses a ubiquinone + NADH + 5 H(+)(in) = a ubiquinol + NAD(+) + 4 H(+)(out). Its function is as follows. Core subunit of the mitochondrial membrane respiratory chain NADH dehydrogenase (Complex I) which catalyzes electron transfer from NADH through the respiratory chain, using ubiquinone as an electron acceptor. Essential for the catalytic activity and assembly of complex I. The chain is NADH-ubiquinone oxidoreductase chain 2 from Sylvisorex johnstoni (Johnston's forest shrew).